The sequence spans 289 residues: S-methyl-5'-thioadenosine phosphorylase (289 aa).

Phosphate contacts are provided by residues Ser-24, 66 to 67 (RH), and 99 to 100 (TA). Position 202 (Met-202) interacts with substrate. Thr-203 is a phosphate binding site. 226–228 (DYD) serves as a coordination point for substrate.

The protein belongs to the PNP/MTAP phosphorylase family. MTAP subfamily. As to quaternary structure, homotrimer.

The protein localises to the cytoplasm. It is found in the nucleus. It catalyses the reaction S-methyl-5'-thioadenosine + phosphate = 5-(methylsulfanyl)-alpha-D-ribose 1-phosphate + adenine. It participates in amino-acid biosynthesis; L-methionine biosynthesis via salvage pathway; S-methyl-5-thio-alpha-D-ribose 1-phosphate from S-methyl-5'-thioadenosine (phosphorylase route): step 1/1. Functionally, catalyzes the reversible phosphorylation of S-methyl-5'-thioadenosine (MTA) to adenine and 5-methylthioribose-1-phosphate. Involved in the breakdown of MTA, a major by-product of polyamine biosynthesis. Responsible for the first step in the methionine salvage pathway after MTA has been generated from S-adenosylmethionine. Has broad substrate specificity with 6-aminopurine nucleosides as preferred substrates. The sequence is that of S-methyl-5'-thioadenosine phosphorylase from Drosophila pseudoobscura pseudoobscura (Fruit fly).